Consider the following 538-residue polypeptide: CWF19-like protein 1 (538 aa).

The segment at 298–324 is disordered; sequence QGRKRSSTGRDSKSSPHPKQPRKPPQP.

Belongs to the CWF19 family. As to expression, expressed in many brain regions, including cerebellum, thalamus and occipital, parietal and temporal lobes (at protein level). Also expressed in the spinal cord (at protein level).

In Homo sapiens (Human), this protein is CWF19-like protein 1 (CWF19L1).